A 434-amino-acid chain; its full sequence is Salicylate hydroxylase (434 aa).

9–38 (RIGIVGGGISGVALALELCRYSHIQVQLFE) contributes to the FAD binding site.

In terms of assembly, monomer. FAD is required as a cofactor.

The enzyme catalyses salicylate + NADH + O2 + 2 H(+) = catechol + CO2 + NAD(+) + H2O. It functions in the pathway aromatic compound metabolism; naphthalene degradation. The sequence is that of Salicylate hydroxylase (nahG) from Pseudomonas putida (Arthrobacter siderocapsulatus).